The sequence spans 325 residues: Beta-ketoacyl-[acyl-carrier-protein] synthase III (325 aa).

Catalysis depends on residues Cys-119 and His-252. Positions 253 to 257 (QANIR) are ACP-binding. Residue Asn-282 is part of the active site.

This sequence belongs to the thiolase-like superfamily. FabH family. As to quaternary structure, homodimer.

It is found in the cytoplasm. It catalyses the reaction malonyl-[ACP] + acetyl-CoA + H(+) = 3-oxobutanoyl-[ACP] + CO2 + CoA. The protein operates within lipid metabolism; fatty acid biosynthesis. Catalyzes the condensation reaction of fatty acid synthesis by the addition to an acyl acceptor of two carbons from malonyl-ACP. Catalyzes the first condensation reaction which initiates fatty acid synthesis and may therefore play a role in governing the total rate of fatty acid production. Possesses both acetoacetyl-ACP synthase and acetyl transacylase activities. Its substrate specificity determines the biosynthesis of branched-chain and/or straight-chain of fatty acids. The protein is Beta-ketoacyl-[acyl-carrier-protein] synthase III of Acidovorax ebreus (strain TPSY) (Diaphorobacter sp. (strain TPSY)).